The chain runs to 494 residues: Cysteine--tRNA ligase (494 aa).

Cys-29 lines the Zn(2+) pocket. The 'HIGH' region signature appears at 31–41 (VTVYDYCHLGH). Residues Cys-216, His-241, and Glu-245 each coordinate Zn(2+). Positions 273-277 (KMSKS) match the 'KMSKS' region motif. Lys-276 is a binding site for ATP.

The protein belongs to the class-I aminoacyl-tRNA synthetase family. As to quaternary structure, monomer. It depends on Zn(2+) as a cofactor.

It localises to the cytoplasm. The enzyme catalyses tRNA(Cys) + L-cysteine + ATP = L-cysteinyl-tRNA(Cys) + AMP + diphosphate. The chain is Cysteine--tRNA ligase from Cyanothece sp. (strain PCC 7425 / ATCC 29141).